The chain runs to 225 residues: PKHD-type hydroxylase YbiX (225 aa).

The Fe2OG dioxygenase domain occupies 78 to 177 (TLSTPLFNRY…RVASFMWIQS (100 aa)). The Fe cation site is built by H96, D98, and H158. Residue R168 participates in 2-oxoglutarate binding.

The cofactor is Fe(2+). L-ascorbate serves as cofactor.

This Shigella boydii serotype 18 (strain CDC 3083-94 / BS512) protein is PKHD-type hydroxylase YbiX.